The following is a 91-amino-acid chain: Probable Fe(2+)-trafficking protein (91 aa).

This sequence belongs to the Fe(2+)-trafficking protein family.

In terms of biological role, could be a mediator in iron transactions between iron acquisition and iron-requiring processes, such as synthesis and/or repair of Fe-S clusters in biosynthetic enzymes. This is Probable Fe(2+)-trafficking protein from Xanthomonas axonopodis pv. citri (strain 306).